A 471-amino-acid polypeptide reads, in one-letter code: UDP-N-acetylmuramate--L-alanine ligase (471 aa).

114 to 120 (GTHGKTT) provides a ligand contact to ATP.

This sequence belongs to the MurCDEF family.

Its subcellular location is the cytoplasm. It carries out the reaction UDP-N-acetyl-alpha-D-muramate + L-alanine + ATP = UDP-N-acetyl-alpha-D-muramoyl-L-alanine + ADP + phosphate + H(+). The protein operates within cell wall biogenesis; peptidoglycan biosynthesis. Its function is as follows. Cell wall formation. This is UDP-N-acetylmuramate--L-alanine ligase from Methylobacterium sp. (strain 4-46).